The primary structure comprises 1059 residues: Carbamoyl phosphate synthase large chain (1059 aa).

Residues 1-401 (MPKRKDIQKI…SLLKACRSLE (401 aa)) are carboxyphosphate synthetic domain. Positions 129, 169, 175, 176, 208, 210, 215, 241, 242, 243, 284, and 298 each coordinate ATP. Positions 133–327 (KQLMEELGQP…IAKLAAKIAV (195 aa)) constitute an ATP-grasp 1 domain. Positions 284, 298, and 300 each coordinate Mg(2+). Positions 284, 298, and 300 each coordinate Mn(2+). The segment at 402-546 (VCVDHNELPA…YSTYGFENES (145 aa)) is oligomerization domain. Residues 547–929 (VKSSKESVLV…ALYKAFEASY (383 aa)) are carbamoyl phosphate synthetic domain. The ATP-grasp 2 domain occupies 671–861 (EQALKELDIP…MAQVATRLIL (191 aa)). Residues Arg707, Ser746, Ile748, Glu752, Gly777, Val778, His779, Ser780, Gln820, and Glu832 each coordinate ATP. 3 residues coordinate Mg(2+): Gln820, Glu832, and Asn834. Positions 820, 832, and 834 each coordinate Mn(2+). The 130-residue stretch at 930 to 1059 (LHLPNFGNIV…ESRSFTTEAI (130 aa)) folds into the MGS-like domain. The segment at 930–1059 (LHLPNFGNIV…ESRSFTTEAI (130 aa)) is allosteric domain.

This sequence belongs to the CarB family. Composed of two chains; the small (or glutamine) chain promotes the hydrolysis of glutamine to ammonia, which is used by the large (or ammonia) chain to synthesize carbamoyl phosphate. Tetramer of heterodimers (alpha,beta)4. Mg(2+) serves as cofactor. Mn(2+) is required as a cofactor.

It carries out the reaction hydrogencarbonate + L-glutamine + 2 ATP + H2O = carbamoyl phosphate + L-glutamate + 2 ADP + phosphate + 2 H(+). The catalysed reaction is hydrogencarbonate + NH4(+) + 2 ATP = carbamoyl phosphate + 2 ADP + phosphate + 2 H(+). Its pathway is amino-acid biosynthesis; L-arginine biosynthesis; carbamoyl phosphate from bicarbonate: step 1/1. It functions in the pathway pyrimidine metabolism; UMP biosynthesis via de novo pathway; (S)-dihydroorotate from bicarbonate: step 1/3. Functionally, large subunit of the glutamine-dependent carbamoyl phosphate synthetase (CPSase). CPSase catalyzes the formation of carbamoyl phosphate from the ammonia moiety of glutamine, carbonate, and phosphate donated by ATP, constituting the first step of 2 biosynthetic pathways, one leading to arginine and/or urea and the other to pyrimidine nucleotides. The large subunit (synthetase) binds the substrates ammonia (free or transferred from glutamine from the small subunit), hydrogencarbonate and ATP and carries out an ATP-coupled ligase reaction, activating hydrogencarbonate by forming carboxy phosphate which reacts with ammonia to form carbamoyl phosphate. This chain is Carbamoyl phosphate synthase large chain, found in Streptococcus sanguinis (strain SK36).